The primary structure comprises 170 residues: Adenine phosphoribosyltransferase (170 aa).

It belongs to the purine/pyrimidine phosphoribosyltransferase family. As to quaternary structure, homodimer.

The protein localises to the cytoplasm. The enzyme catalyses AMP + diphosphate = 5-phospho-alpha-D-ribose 1-diphosphate + adenine. It participates in purine metabolism; AMP biosynthesis via salvage pathway; AMP from adenine: step 1/1. Functionally, catalyzes a salvage reaction resulting in the formation of AMP, that is energically less costly than de novo synthesis. The polypeptide is Adenine phosphoribosyltransferase (Cyanothece sp. (strain PCC 7425 / ATCC 29141)).